Consider the following 622-residue polypeptide: Coiled-coil domain-containing protein 17 (622 aa).

Coiled coils occupy residues 81 to 102, 146 to 207, and 294 to 320; these read RSAL…QEMR, ARRV…LEVL, and GELP…RGRA. Disordered regions lie at residues 334 to 356 and 584 to 622; these read SLQP…PLPP and PAVG…PVSF. Positions 344–356 are enriched in pro residues; it reads PLLPPPVAPPLPP. Positions 593-615 are enriched in basic and acidic residues; it reads PRTEEPLSGVKDRDEGLGPHHSS.

The chain is Coiled-coil domain-containing protein 17 (CCDC17) from Homo sapiens (Human).